We begin with the raw amino-acid sequence, 374 residues long: GDSL esterase/lipase At3g50400 (374 aa).

An N-terminal signal peptide occupies residues 1–26 (MKKSIFFVPVLVLFFFGSRFSRVASA). S41 functions as the Nucleophile in the catalytic mechanism. Residues N104 and N125 are each glycosylated (N-linked (GlcNAc...) asparagine). Catalysis depends on residues D339 and H342.

This sequence belongs to the 'GDSL' lipolytic enzyme family.

The protein localises to the secreted. The chain is GDSL esterase/lipase At3g50400 from Arabidopsis thaliana (Mouse-ear cress).